A 299-amino-acid chain; its full sequence is Lipoyl synthase 2 (299 aa).

7 residues coordinate [4Fe-4S] cluster: cysteine 45, cysteine 50, cysteine 56, cysteine 71, cysteine 75, cysteine 78, and serine 295. In terms of domain architecture, Radical SAM core spans tyrosine 57–lysine 284.

The protein belongs to the radical SAM superfamily. Lipoyl synthase family. It depends on [4Fe-4S] cluster as a cofactor.

Its subcellular location is the cytoplasm. It catalyses the reaction [[Fe-S] cluster scaffold protein carrying a second [4Fe-4S](2+) cluster] + N(6)-octanoyl-L-lysyl-[protein] + 2 oxidized [2Fe-2S]-[ferredoxin] + 2 S-adenosyl-L-methionine + 4 H(+) = [[Fe-S] cluster scaffold protein] + N(6)-[(R)-dihydrolipoyl]-L-lysyl-[protein] + 4 Fe(3+) + 2 hydrogen sulfide + 2 5'-deoxyadenosine + 2 L-methionine + 2 reduced [2Fe-2S]-[ferredoxin]. It participates in protein modification; protein lipoylation via endogenous pathway; protein N(6)-(lipoyl)lysine from octanoyl-[acyl-carrier-protein]: step 2/2. In terms of biological role, catalyzes the radical-mediated insertion of two sulfur atoms into the C-6 and C-8 positions of the octanoyl moiety bound to the lipoyl domains of lipoate-dependent enzymes, thereby converting the octanoylated domains into lipoylated derivatives. The protein is Lipoyl synthase 2 of Prochlorococcus marinus subsp. pastoris (strain CCMP1986 / NIES-2087 / MED4).